The primary structure comprises 446 residues: N-succinylarginine dihydrolase (446 aa).

Residues 19 to 28, asparagine 110, and 137 to 138 each bind substrate; these read AGLSFGNVAS and HR. Glutamate 174 is an active-site residue. Residue arginine 213 coordinates substrate. Histidine 249 is a catalytic residue. Substrate is bound by residues aspartate 251 and asparagine 364. Cysteine 370 functions as the Nucleophile in the catalytic mechanism.

The protein belongs to the succinylarginine dihydrolase family. As to quaternary structure, homodimer.

It catalyses the reaction N(2)-succinyl-L-arginine + 2 H2O + 2 H(+) = N(2)-succinyl-L-ornithine + 2 NH4(+) + CO2. Its pathway is amino-acid degradation; L-arginine degradation via AST pathway; L-glutamate and succinate from L-arginine: step 2/5. Functionally, catalyzes the hydrolysis of N(2)-succinylarginine into N(2)-succinylornithine, ammonia and CO(2). The sequence is that of N-succinylarginine dihydrolase from Burkholderia lata (strain ATCC 17760 / DSM 23089 / LMG 22485 / NCIMB 9086 / R18194 / 383).